Here is a 545-residue protein sequence, read N- to C-terminus: CTP synthase (545 aa).

The interval 1–265 is amidoligase domain; the sequence is MSKYIFVTGG…LVPIAKQLDL (265 aa). A CTP-binding site is contributed by Ser-13. A UTP-binding site is contributed by Ser-13. ATP contacts are provided by residues 14–19 and Asp-71; that span reads SLGKGI. Positions 71 and 139 each coordinate Mg(2+). Residues 146–148, 186–191, and Lys-222 each bind CTP; these read DIE and KTKPTQ. UTP-binding positions include 186–191 and Lys-222; that span reads KTKPTQ. The Glutamine amidotransferase type-1 domain maps to 290-544; it reads KIAFVGKYLQ…VENAYKCQRS (255 aa). Gly-355 serves as a coordination point for L-glutamine. Residue Cys-382 is the Nucleophile; for glutamine hydrolysis of the active site. L-glutamine contacts are provided by residues 383-386, Glu-406, and Arg-473; that span reads LGMQ. Catalysis depends on residues His-517 and Glu-519.

It belongs to the CTP synthase family. In terms of assembly, homotetramer.

The catalysed reaction is UTP + L-glutamine + ATP + H2O = CTP + L-glutamate + ADP + phosphate + 2 H(+). The enzyme catalyses L-glutamine + H2O = L-glutamate + NH4(+). It catalyses the reaction UTP + NH4(+) + ATP = CTP + ADP + phosphate + 2 H(+). Its pathway is pyrimidine metabolism; CTP biosynthesis via de novo pathway; CTP from UDP: step 2/2. Allosterically activated by GTP, when glutamine is the substrate; GTP has no effect on the reaction when ammonia is the substrate. The allosteric effector GTP functions by stabilizing the protein conformation that binds the tetrahedral intermediate(s) formed during glutamine hydrolysis. Inhibited by the product CTP, via allosteric rather than competitive inhibition. Functionally, catalyzes the ATP-dependent amination of UTP to CTP with either L-glutamine or ammonia as the source of nitrogen. Regulates intracellular CTP levels through interactions with the four ribonucleotide triphosphates. This is CTP synthase from Nautilia profundicola (strain ATCC BAA-1463 / DSM 18972 / AmH).